A 1256-amino-acid chain; its full sequence is Centrosome and spindle pole-associated protein 1 (1256 aa).

Coiled coils occupy residues 38-62 (ADNL…LESD) and 114-135 (EDYE…RRYL). The span at 189-208 (GKEESSEKFRQVEKSTEPKS) shows a compositional bias: basic and acidic residues. 2 disordered regions span residues 189 to 244 (GKEE…LTPS) and 381 to 403 (AENK…CSPF). A compositionally biased stretch (polar residues) spans 222–232 (LTSQIQTSCEN). Serine 244 is subject to Phosphoserine. A coiled-coil region spans residues 244–270 (SEAYEELLNQRRLEEDRYRQLDDEIEL). Residues 417–449 (QRRKEKYRLELLEQMAEQQRNKRREKDLELRVA) are a coiled coil. Phosphoserine is present on residues serine 459 and serine 527. A coiled-coil region spans residues 625-669 (SKQSLQSYQEALQQQIREREERRKKEREEKEEYEAKLEAEMRTYN). Disordered stretches follow at residues 735-757 (ANKS…VFGE) and 813-853 (EYEE…KKEE). The segment covering 736-748 (NKSSGHMQTQSSP) has biased composition (polar residues). Phosphoserine is present on residues serine 901 and serine 920. Residues 913 to 932 (SSMSRAQSPPVPARKNQLRA) are disordered. The stretch at 925-964 (ARKNQLRAEEEKKNVIMELSEMRKQLRSEERRLQERLLHM) forms a coiled coil. At serine 966 the chain carries Phosphoserine. Disordered stretches follow at residues 1114-1147 (EDDV…RPNV) and 1232-1256 (LNQE…TAHG). Positions 1246-1256 (FTWQGLSTAHG) are enriched in polar residues.

In terms of assembly, interacts with PLEKHG6. Interacts with ARMC9, TOGARAM1, CCDC66, CEP104 and CEP290. Phosphorylated. Phosphorylation increases in colcemide-treated cells. As to expression, expressed in adult and fetal brain with enrichment in the cerebellum. Detected in testis.

It is found in the cytoplasm. The protein localises to the cytoskeleton. The protein resides in the microtubule organizing center. It localises to the centrosome. Its subcellular location is the spindle. It is found in the spindle pole. The protein localises to the cell projection. The protein resides in the cilium. Its function is as follows. May play a role in cell-cycle-dependent microtubule organization. The polypeptide is Centrosome and spindle pole-associated protein 1 (CSPP1) (Homo sapiens (Human)).